Here is a 127-residue protein sequence, read N- to C-terminus: RxLR effector protein SFI3 (127 aa).

The N-terminal stretch at 1 to 20 (MRFLLVAVVAMMALVSSSTA) is a signal peptide. The RxLR-dEER motif lies at 40–62 (RSLRNTEERSIAAILAEAGEEDR). A WY-domain region spans residues 72–107 (WYKAKLTPTQVKTVLGVSQAEMNNVAKQLQRLYLGY).

The protein belongs to the RxLR effector family. As to quaternary structure, forms an unusual trans-homodimer. Interacts with host UBK.

The protein resides in the secreted. It localises to the host nucleus. Its subcellular location is the host nucleolus. Its function is as follows. Effector that suppresses flg22-induced post-translational MAP kinase activation in potato and tomato, but not in Arabidopsis. The perception of highly conserved pathogen- or microbe-associated molecular patterns (PAMPs/MAMPs), such as flg22, triggers converging signaling pathways recruiting MAP kinase cascades and inducing transcriptional re-programming, yielding a generic antimicrobial response. Does not suppress programmed cell death triggered by the P.infestans elicitin infestin-1 (INF1), or by co-expression of tomato Cf4 with Cladosporium fulvum Avr4. Suppresses early pattern-triggered immunity (PTI) via interaction with the U-box-kinase protein UBK, a positive regulator of specific PTI pathways in both potato and Nicotiana benthamiana. In Phytophthora infestans (strain T30-4) (Potato late blight agent), this protein is RxLR effector protein SFI3.